A 264-amino-acid chain; its full sequence is Small ribosomal subunit protein eS1A (264 aa).

A disordered region spans residues 233-264 (GEGGGTGKPAGDETGAKVERADGYEPPVQESV). Basic and acidic residues predominate over residues 242–255 (AGDETGAKVERADG).

Belongs to the eukaryotic ribosomal protein eS1 family. As to quaternary structure, component of the small ribosomal subunit. Mature ribosomes consist of a small (40S) and a large (60S) subunit. The 40S subunit contains about 33 different proteins and 1 molecule of RNA (18S). The 60S subunit contains about 49 different proteins and 3 molecules of RNA (28S, 5.8S and 5S). Part of the small subunit (SSU) processome, composed of more than 70 proteins and the RNA chaperone small nucleolar RNA (snoRNA) U3.

It is found in the cytoplasm. It localises to the nucleus. Its subcellular location is the nucleolus. Functionally, component of the small ribosomal subunit. The ribosome is a large ribonucleoprotein complex responsible for the synthesis of proteins in the cell. Part of the small subunit (SSU) processome, first precursor of the small eukaryotic ribosomal subunit. During the assembly of the SSU processome in the nucleolus, many ribosome biogenesis factors, an RNA chaperone and ribosomal proteins associate with the nascent pre-rRNA and work in concert to generate RNA folding, modifications, rearrangements and cleavage as well as targeted degradation of pre-ribosomal RNA by the RNA exosome. May play a role during erythropoiesis. The chain is Small ribosomal subunit protein eS1A (rps3a-a) from Xenopus laevis (African clawed frog).